Reading from the N-terminus, the 158-residue chain is Rhombotin-2 (158 aa).

2 LIM zinc-binding domains span residues 28–90 (LTCG…LFGQ) and 92–154 (GLCA…WTKL).

As to expression, expression becomes restricted to the ventral blood island (VBI) as the embryo develops. In late neurula and early tailbud embryos, also expressed in the dorsal lateral plate (DLP), the site of definitive hematopoiesis in the tadpole. Expression in the DLP diminishes during tailbud stages. Expressed in circulating blood cells of tadpoles. Also expressed in non-hematopoietic sites, including the tailbud region and the central nervous system of early neurula embryos.

Its subcellular location is the nucleus. Transcription factor that acts synergistically with tal1/scl and gata1 to specify embryonic dorsal mesoderm to a hematopoietic fate. Induces globin gene expression together with fgf. In Xenopus laevis (African clawed frog), this protein is Rhombotin-2.